We begin with the raw amino-acid sequence, 95 residues long: Putative defensin-like protein 262 (95 aa).

An N-terminal signal peptide occupies residues Met-1–Ala-26. 4 disulfides stabilise this stretch: Cys-48–Cys-95, Cys-64–Cys-83, Cys-70–Cys-91, and Cys-74–Cys-93.

This sequence belongs to the DEFL family.

Its subcellular location is the secreted. In Arabidopsis thaliana (Mouse-ear cress), this protein is Putative defensin-like protein 262.